The chain runs to 284 residues: Polyamine aminopropyltransferase (284 aa).

Residues 2-237 (ELWYTEQHTE…GHWLFGFASK (236 aa)) enclose the PABS domain. Position 31 (glutamine 31) interacts with S-methyl-5'-thioadenosine. Spermidine-binding residues include histidine 62 and aspartate 86. S-methyl-5'-thioadenosine-binding positions include glutamate 106 and 137-138 (DG). Aspartate 155 functions as the Proton acceptor in the catalytic mechanism. 155–158 (DSTD) lines the spermidine pocket. Proline 162 lines the S-methyl-5'-thioadenosine pocket.

It belongs to the spermidine/spermine synthase family. As to quaternary structure, homodimer or homotetramer.

It is found in the cytoplasm. The catalysed reaction is S-adenosyl 3-(methylsulfanyl)propylamine + putrescine = S-methyl-5'-thioadenosine + spermidine + H(+). It functions in the pathway amine and polyamine biosynthesis; spermidine biosynthesis; spermidine from putrescine: step 1/1. In terms of biological role, catalyzes the irreversible transfer of a propylamine group from the amino donor S-adenosylmethioninamine (decarboxy-AdoMet) to putrescine (1,4-diaminobutane) to yield spermidine. The sequence is that of Polyamine aminopropyltransferase from Alkaliphilus oremlandii (strain OhILAs) (Clostridium oremlandii (strain OhILAs)).